Reading from the N-terminus, the 225-residue chain is Methylthioribulose-1-phosphate dehydratase (225 aa).

His106 and His108 together coordinate Zn(2+).

The protein belongs to the aldolase class II family. MtnB subfamily. Zn(2+) is required as a cofactor.

The catalysed reaction is 5-(methylsulfanyl)-D-ribulose 1-phosphate = 5-methylsulfanyl-2,3-dioxopentyl phosphate + H2O. Its pathway is amino-acid biosynthesis; L-methionine biosynthesis via salvage pathway; L-methionine from S-methyl-5-thio-alpha-D-ribose 1-phosphate: step 2/6. Functionally, catalyzes the dehydration of methylthioribulose-1-phosphate (MTRu-1-P) into 2,3-diketo-5-methylthiopentyl-1-phosphate (DK-MTP-1-P). This chain is Methylthioribulose-1-phosphate dehydratase, found in Xanthomonas oryzae pv. oryzae (strain PXO99A).